A 152-amino-acid polypeptide reads, in one-letter code: Biotin carboxyl carrier protein of acetyl-CoA carboxylase (152 aa).

One can recognise a Biotinyl-binding domain in the interval 72–148 (IIDILSPISG…TKNQVLMKII (77 aa)). Residue Lys-114 is modified to N6-biotinyllysine.

It is found in the plastid. Its subcellular location is the chloroplast. The protein operates within lipid metabolism; fatty acid biosynthesis. Functionally, this protein is a component of the acetyl coenzyme A carboxylase complex; first, biotin carboxylase catalyzes the carboxylation of the carrier protein and then the transcarboxylase transfers the carboxyl group to form malonyl-CoA. This Cyanidium caldarium (Red alga) protein is Biotin carboxyl carrier protein of acetyl-CoA carboxylase (accB).